A 272-amino-acid chain; its full sequence is MTKESADKQQSTAENIAVSMQNVTISYGKSAAVKDVFCEISTGKVTAFIGPSGCGKSTLLRSINRMNDLIEGCTLKGRVLFDGVDLYDAAVDPVEVRRRIGMVFQQPNPFPKSIYENVAFGARINGYTGNMDELVERSLRQAAVWDECKDKLKDSGCSLSGGQQQRLCIARTIATQPEVILMDEPCSALDPISTLKIEETMHELKKSFTIVIVTHNMQQAVRVSDETAFFNAETVENRSGKVGYLVEFNDTQSIFNSPQQQATQDYVSGRFG.

One can recognise an ABC transporter domain in the interval 18-257; it reads VSMQNVTISY…FNDTQSIFNS (240 aa). Residue 50–57 participates in ATP binding; that stretch reads GPSGCGKS.

Belongs to the ABC transporter superfamily. Phosphate importer (TC 3.A.1.7) family. As to quaternary structure, the complex is composed of two ATP-binding proteins (PstB), two transmembrane proteins (PstC and PstA) and a solute-binding protein (PstS).

It localises to the cell inner membrane. It carries out the reaction phosphate(out) + ATP + H2O = ADP + 2 phosphate(in) + H(+). Functionally, part of the ABC transporter complex PstSACB involved in phosphate import. Responsible for energy coupling to the transport system. The sequence is that of Phosphate import ATP-binding protein PstB from Synechococcus sp. (strain CC9902).